We begin with the raw amino-acid sequence, 245 residues long: Ubiquinone/menaquinone biosynthesis C-methyltransferase UbiE (245 aa).

S-adenosyl-L-methionine is bound by residues Thr-71, Asp-92, and 118–119 (DA).

The protein belongs to the class I-like SAM-binding methyltransferase superfamily. MenG/UbiE family.

The catalysed reaction is a 2-demethylmenaquinol + S-adenosyl-L-methionine = a menaquinol + S-adenosyl-L-homocysteine + H(+). It catalyses the reaction a 2-methoxy-6-(all-trans-polyprenyl)benzene-1,4-diol + S-adenosyl-L-methionine = a 5-methoxy-2-methyl-3-(all-trans-polyprenyl)benzene-1,4-diol + S-adenosyl-L-homocysteine + H(+). Its pathway is quinol/quinone metabolism; menaquinone biosynthesis; menaquinol from 1,4-dihydroxy-2-naphthoate: step 2/2. It participates in cofactor biosynthesis; ubiquinone biosynthesis. Methyltransferase required for the conversion of demethylmenaquinol (DMKH2) to menaquinol (MKH2) and the conversion of 2-polyprenyl-6-methoxy-1,4-benzoquinol (DDMQH2) to 2-polyprenyl-3-methyl-6-methoxy-1,4-benzoquinol (DMQH2). The chain is Ubiquinone/menaquinone biosynthesis C-methyltransferase UbiE from Neisseria meningitidis serogroup C / serotype 2a (strain ATCC 700532 / DSM 15464 / FAM18).